The primary structure comprises 486 residues: Glutamyl-tRNA(Gln) amidotransferase subunit A (486 aa).

The active-site Charge relay system is lysine 77. Positions 130-158 (SGENSSVKPTKNAWDQTKVPGGSSSGSAA) are disordered. Residues 132-144 (ENSSVKPTKNAWD) are compositionally biased toward polar residues. The active-site Charge relay system is serine 152. Residue serine 176 is the Acyl-ester intermediate of the active site.

This sequence belongs to the amidase family. GatA subfamily. As to quaternary structure, heterotrimer of A, B and C subunits.

It catalyses the reaction L-glutamyl-tRNA(Gln) + L-glutamine + ATP + H2O = L-glutaminyl-tRNA(Gln) + L-glutamate + ADP + phosphate + H(+). Allows the formation of correctly charged Gln-tRNA(Gln) through the transamidation of misacylated Glu-tRNA(Gln) in organisms which lack glutaminyl-tRNA synthetase. The reaction takes place in the presence of glutamine and ATP through an activated gamma-phospho-Glu-tRNA(Gln). The polypeptide is Glutamyl-tRNA(Gln) amidotransferase subunit A (gatA) (Lactococcus lactis subsp. lactis (strain IL1403) (Streptococcus lactis)).